Here is a 66-residue protein sequence, read N- to C-terminus: Large ribosomal subunit protein uL29 (66 aa).

It belongs to the universal ribosomal protein uL29 family.

The protein is Large ribosomal subunit protein uL29 of Nitrosococcus oceani (strain ATCC 19707 / BCRC 17464 / JCM 30415 / NCIMB 11848 / C-107).